The chain runs to 284 residues: Bifunctional protein FolD (284 aa).

NADP(+) contacts are provided by residues 165–167 (GRS), Ser-190, and Ile-231.

This sequence belongs to the tetrahydrofolate dehydrogenase/cyclohydrolase family. In terms of assembly, homodimer.

The catalysed reaction is (6R)-5,10-methylene-5,6,7,8-tetrahydrofolate + NADP(+) = (6R)-5,10-methenyltetrahydrofolate + NADPH. It catalyses the reaction (6R)-5,10-methenyltetrahydrofolate + H2O = (6R)-10-formyltetrahydrofolate + H(+). Its pathway is one-carbon metabolism; tetrahydrofolate interconversion. Its function is as follows. Catalyzes the oxidation of 5,10-methylenetetrahydrofolate to 5,10-methenyltetrahydrofolate and then the hydrolysis of 5,10-methenyltetrahydrofolate to 10-formyltetrahydrofolate. The sequence is that of Bifunctional protein FolD from Streptococcus thermophilus (strain ATCC BAA-250 / LMG 18311).